Consider the following 256-residue polypeptide: Trans-aconitate 2-methyltransferase (256 aa).

It belongs to the methyltransferase superfamily. Tam family.

It localises to the cytoplasm. The catalysed reaction is trans-aconitate + S-adenosyl-L-methionine = (E)-3-(methoxycarbonyl)pent-2-enedioate + S-adenosyl-L-homocysteine. Its function is as follows. Catalyzes the S-adenosylmethionine monomethyl esterification of trans-aconitate. The chain is Trans-aconitate 2-methyltransferase from Afipia carboxidovorans (strain ATCC 49405 / DSM 1227 / KCTC 32145 / OM5) (Oligotropha carboxidovorans).